Reading from the N-terminus, the 328-residue chain is Fructose-1,6-bisphosphatase class 1 (328 aa).

4 residues coordinate Mg(2+): glutamate 89, aspartate 110, leucine 112, and aspartate 113. Residues asparagine 206, tyrosine 234, 252–254, and lysine 264 contribute to the substrate site; that span reads YLY. Glutamate 270 provides a ligand contact to Mg(2+).

Belongs to the FBPase class 1 family. Homotetramer. Requires Mg(2+) as cofactor.

The protein resides in the cytoplasm. The enzyme catalyses beta-D-fructose 1,6-bisphosphate + H2O = beta-D-fructose 6-phosphate + phosphate. The protein operates within carbohydrate biosynthesis; gluconeogenesis. The sequence is that of Fructose-1,6-bisphosphatase class 1 from Wigglesworthia glossinidia brevipalpis.